A 197-amino-acid polypeptide reads, in one-letter code: Transposon Tn552 resolvase (197 aa).

Residues M1–G136 enclose the Resolvase/invertase-type recombinase catalytic domain. The active-site O-(5'-phospho-DNA)-serine intermediate is S9. Residues I163–N182 constitute a DNA-binding region (H-T-H motif).

Belongs to the site-specific recombinase resolvase family.

In terms of biological role, resolvase catalyzes the resolution (a site-specific recombination) of the cointegrated replicon to yield the final transposition products. The sequence is that of Transposon Tn552 resolvase (tnpR) from Staphylococcus aureus.